We begin with the raw amino-acid sequence, 890 residues long: Putative RNA-binding protein 15B (890 aa).

Residues 1–133 (MKRQSERDSS…AEPACPGSSA (133 aa)) form a disordered region. Over residues 10–20 (SPSGRGSSSSA) the composition is skewed to low complexity. Composition is skewed to basic and acidic residues over residues 22-34 (RPRE…EAGG) and 66-78 (GHRD…DANH). The segment covering 86 to 99 (SGSGAGGGGRGGKA) has biased composition (gly residues). 2 positions are modified to phosphoserine: Ser-109 and Ser-113. Residues 113-124 (SPLPPPPPPPGA) show a composition bias toward pro residues. The RRM 1 domain maps to 139-219 (KTLLISSLSP…RPLKVEPVYL (81 aa)). A Glycyl lysine isopeptide (Lys-Gly) (interchain with G-Cter in SUMO2) cross-link involves residue Lys-213. Residues 219–253 (LRGGGGSSRRSSSSSAAASTPPPGPPAPADPLGYL) are disordered. Low complexity predominate over residues 226 to 237 (SRRSSSSSAAAS). The segment covering 238 to 247 (TPPPGPPAPA) has biased composition (pro residues). Phosphoserine occurs at positions 265 and 267. RRM domains lie at 337–414 (RNLF…YGKA) and 418–492 (TRLW…FAKA). Thr-532 is subject to Phosphothreonine. The interval 547–705 (EGDWTSPSKS…KPLEEPKHET (159 aa)) is disordered. Phosphoserine is present on residues Ser-552, Ser-556, and Ser-562. 2 stretches are compositionally biased toward basic and acidic residues: residues 573 to 616 (RSGE…ERSR) and 626 to 646 (RGSD…EGTK). A Nuclear localization signal motif is present at residues 593-597 (RRKRR). Positions 647 to 657 (ESSSNSLSNSR) are enriched in low complexity. The span at 671 to 703 (EAADSSHGKKARDSERNHRTTEAEPKPLEEPKH) shows a compositional bias: basic and acidic residues. Lys-702 participates in a covalent cross-link: Glycyl lysine isopeptide (Lys-Gly) (interchain with G-Cter in SUMO2). An SPOC domain is found at 711-889 (LSEYAQTLQL…HMVIVIVRDT (179 aa)). The interval 722–890 (WNGLLVLKNS…MVIVIVRDTA (169 aa)) is interaction with Epstein-Barr virus BMLF1.

It belongs to the RRM Spen family. As to quaternary structure, component of the WMM complex, a N6-methyltransferase complex composed of a catalytic subcomplex, named MAC, and of an associated subcomplex, named MACOM. The MAC subcomplex is composed of METTL3 and METTL14. The MACOM subcomplex is composed of WTAP, ZC3H13, CBLL1/HAKAI, VIRMA, and, in some cases of RBM15 (RBM15 or RBM15B). May interact with NCOR2. Interacts with NXF1, the interaction is required to promote mRNA export. (Microbial infection) Interacts (via the SPOC domain) with Epstein-Barr virus BMLF1 (via the N-terminus); the interaction is direct. In terms of tissue distribution, ubiquitously expressed.

It localises to the nucleus. The protein resides in the nucleoplasm. Its subcellular location is the nucleus speckle. It is found in the nucleus envelope. Its function is as follows. RNA-binding protein that acts as a key regulator of N6-methyladenosine (m6A) methylation of RNAs, thereby regulating different processes, such as alternative splicing of mRNAs and X chromosome inactivation mediated by Xist RNA. Associated component of the WMM complex, a complex that mediates N6-methyladenosine (m6A) methylation of RNAs, a modification that plays a role in the efficiency of mRNA splicing and RNA processing. Plays a key role in m6A methylation, possibly by binding target RNAs and recruiting the WMM complex. Involved in random X inactivation mediated by Xist RNA: acts by binding Xist RNA and recruiting the WMM complex, which mediates m6A methylation, leading to target YTHDC1 reader on Xist RNA and promoting transcription repression activity of Xist. Functions in the regulation of alternative or illicit splicing, possibly by regulating m6A methylation. Inhibits pre-mRNA splicing. Also functions as a mRNA export factor by acting as a cofactor for the nuclear export receptor NXF1. The polypeptide is Putative RNA-binding protein 15B (Homo sapiens (Human)).